The chain runs to 199 residues: Nucleoside triphosphate pyrophosphatase (199 aa).

The active-site Proton acceptor is D72.

This sequence belongs to the Maf family. It depends on a divalent metal cation as a cofactor.

It is found in the cytoplasm. The catalysed reaction is a ribonucleoside 5'-triphosphate + H2O = a ribonucleoside 5'-phosphate + diphosphate + H(+). The enzyme catalyses a 2'-deoxyribonucleoside 5'-triphosphate + H2O = a 2'-deoxyribonucleoside 5'-phosphate + diphosphate + H(+). Functionally, nucleoside triphosphate pyrophosphatase. May have a dual role in cell division arrest and in preventing the incorporation of modified nucleotides into cellular nucleic acids. The protein is Nucleoside triphosphate pyrophosphatase of Synechococcus elongatus (strain ATCC 33912 / PCC 7942 / FACHB-805) (Anacystis nidulans R2).